The sequence spans 255 residues: Small ribosomal subunit protein eS1 (255 aa).

A2 is modified (N-acetylalanine; partial).

The protein belongs to the eukaryotic ribosomal protein eS1 family. In terms of assembly, component of the small ribosomal subunit. Mature ribosomes consist of a small (40S) and a large (60S) subunit. The 40S subunit contains about 33 different proteins and 1 molecule of RNA (18S). The 60S subunit contains about 49 different proteins and 3 molecules of RNA (25S, 5.8S and 5S).

The protein localises to the cytoplasm. This chain is Small ribosomal subunit protein eS1, found in Arthroderma otae (strain ATCC MYA-4605 / CBS 113480) (Microsporum canis).